Reading from the N-terminus, the 411-residue chain is Mitogen-activated protein kinase 8 (411 aa).

Residues 26–321 (YQNLKPIGSG…VDEALQHPYI (296 aa)) form the Protein kinase domain. ATP contacts are provided by residues 32 to 40 (IGSGAQGIV) and Lys-55. At Cys-116 the chain carries S-nitrosocysteine; in inhibited form. Residue Asp-151 is the Proton acceptor of the active site. Thr-183 bears the Phosphothreonine; by MAP2K7 mark. Positions 183 to 185 (TPY) match the TXY motif. Tyr-185 carries the phosphotyrosine; by MAP2K4 modification. A disordered region spans residues 368 to 411 (KNGVIRGQPSPLGAAVINGSQHPVSSPSVNDMSSMSTDPTLASD). Residue Ser-377 is modified to Phosphoserine. The span at 390–403 (PVSSPSVNDMSSMS) shows a compositional bias: low complexity.

This sequence belongs to the protein kinase superfamily. CMGC Ser/Thr protein kinase family. MAP kinase subfamily. In terms of assembly, forms a complex with MAPK8IP1 and ARHGEF28. Found in a complex with SH3RF1, RAC1, MAP3K11/MLK3, MAP2K7/MKK7 and MAPK8IP1/JIP1. Found in a complex with SH3RF1, RAC2, MAP3K7/TAK1, MAP2K7/MKK7, MAPK8IP1/JIP1 and MAPK9/JNK2. Binds to at least four scaffolding proteins, MAPK8IP1/JIP-1, MAPK8IP2/JIP-2, MAPK8IP3/JIP-3/JSAP1 and SPAG9/MAPK8IP4/JIP-4. These proteins also bind other components of the JNK signaling pathway. Interacts with TP53, WWOX. Interacts with JAMP. Interacts with NFATC4. Interacts (phosphorylated form) with NFE2; the interaction phosphorylates NFE2 in undifferentiated cells. Interacts with MECOM; regulates JNK signaling. Interacts with PIN1; this interaction mediates MAPK8 conformational changes leading to the binding of MAPK8 to its substrates. Interacts with HSF1 (via D domain and preferentially with hyperphosphorylated form); this interaction occurs under both normal growth conditions and immediately upon heat shock. Interacts with STMN2, STMN3 and STMN4. Interacts with GRIPAP1. Interacts with POU5F1; phosphorylates POU5F1 at 'Ser-347'. Interacts with HSF4. Requires Mg(2+) as cofactor. Post-translationally, dually phosphorylated on Thr-183 and Tyr-185 by MAP2K7 and MAP2K4, which activates the enzyme. Phosphorylated by TAOK2. Phosphorylated form is more concentrated at synapses than none-phosphorylated. Nitrosylated upon IFN-gamma-induced endogenous NO production, which inhibits the enzyme. May be phosphorylated at Thr-183 and Tyr-185 by MAP3K1/MEKK1.

Its subcellular location is the cytoplasm. The protein localises to the nucleus. It is found in the synapse. It catalyses the reaction L-seryl-[protein] + ATP = O-phospho-L-seryl-[protein] + ADP + H(+). It carries out the reaction L-threonyl-[protein] + ATP = O-phospho-L-threonyl-[protein] + ADP + H(+). Its activity is regulated as follows. Activated by threonine and tyrosine phosphorylation by either of two dual specificity kinases, MAP2K4 and MAP2K7. MAP2K4 shows a strong preference for Tyr-185 while MAP2K7 phosphorylates Tyr-183 preferentially. Inhibited by dual specificity phosphatases, such as DUSP1. Inhibited by SERPINB3. Inhibited by IFN-gamma-induced S-nitrosylation. Functionally, serine/threonine-protein kinase involved in various processes such as cell proliferation, differentiation, migration, transformation and programmed cell death. Extracellular stimuli such as pro-inflammatory cytokines or physical stress stimulate the stress-activated protein kinase/c-Jun N-terminal kinase (SAP/JNK) signaling pathway. In this cascade, two dual specificity kinases MAP2K4/MKK4 and MAP2K7/MKK7 phosphorylate and activate MAPK8/JNK1. In turn, MAPK8/JNK1 phosphorylates a number of transcription factors, primarily components of AP-1 such as JUN, JDP2 and ATF2 and thus regulates AP-1 transcriptional activity. Phosphorylates the replication licensing factor CDT1, inhibiting the interaction between CDT1 and the histone H4 acetylase HBO1 to replication origins. Loss of this interaction abrogates the acetylation required for replication initiation. Promotes stressed cell apoptosis by phosphorylating key regulatory factors including p53/TP53 and Yes-associates protein YAP1. In T-cells, MAPK8 and MAPK9 are required for polarized differentiation of T-helper cells into Th1 cells. Contributes to the survival of erythroid cells by phosphorylating the antagonist of cell death BAD upon EPO stimulation. Mediates starvation-induced BCL2 phosphorylation, BCL2 dissociation from BECN1, and thus activation of autophagy. Phosphorylates STMN2 and hence regulates microtubule dynamics, controlling neurite elongation in cortical neurons. In the developing brain, through its cytoplasmic activity on STMN2, negatively regulates the rate of exit from multipolar stage and of radial migration from the ventricular zone. Phosphorylates several other substrates including heat shock factor protein 4 (HSF4), the deacetylase SIRT1, ELK1, or the E3 ligase ITCH. Phosphorylates the CLOCK-BMAL1 heterodimer and plays a role in the regulation of the circadian clock. Phosphorylates the heat shock transcription factor HSF1, suppressing HSF1-induced transcriptional activity. Phosphorylates POU5F1, which results in the inhibition of POU5F1's transcriptional activity and enhances its proteasomal degradation. Phosphorylates JUND and this phosphorylation is inhibited in the presence of MEN1. In neurons, phosphorylates SYT4 which captures neuronal dense core vesicles at synapses. Phosphorylates EIF4ENIF1/4-ET in response to oxidative stress, promoting P-body assembly. Phosphorylates SIRT6 in response to oxidative stress, stimulating its mono-ADP-ribosyltransferase activity. Phosphorylates NLRP3, promoting assembly of the NLRP3 inflammasome. Phosphorylates ALKBH5 in response to reactive oxygen species (ROS), promoting ALKBH5 sumoylation and inactivation. This chain is Mitogen-activated protein kinase 8 (Mapk8), found in Rattus norvegicus (Rat).